The primary structure comprises 63 residues: Large ribosomal subunit protein uL29 (63 aa).

It belongs to the universal ribosomal protein uL29 family.

This Shewanella denitrificans (strain OS217 / ATCC BAA-1090 / DSM 15013) protein is Large ribosomal subunit protein uL29.